A 99-amino-acid chain; its full sequence is Nucleoid-associated protein SSU98_0195 (99 aa).

Belongs to the YbaB/EbfC family. In terms of assembly, homodimer.

The protein localises to the cytoplasm. Its subcellular location is the nucleoid. In terms of biological role, binds to DNA and alters its conformation. May be involved in regulation of gene expression, nucleoid organization and DNA protection. The chain is Nucleoid-associated protein SSU98_0195 from Streptococcus suis (strain 98HAH33).